We begin with the raw amino-acid sequence, 382 residues long: uncharacterized protein (382 aa).

This is an uncharacterized protein from Bacillus subtilis (strain 168).